The sequence spans 415 residues: MQQDYLSQQRFSDLSLHPIVRDTLAKKGFDFCTPIQALSLPISLNGRDVAGQAQTGTGKTMAFLTATFHHLLTHQDPNLEYPHPRALILASTRELAVQISNDAEFLAKACGLKTALAYGGDGYDKQLQAIERGVDILIGTTGRVIDYVKQGVIGLDEIQVVVLDEADRMFDLGFIRDIRYLLRKCPTPQVRLTMLFSATLSYKVRELAFEDMNDPEYIEIEPEQKTGHRIKEELFYPSNQDKMALLLTLMEDEWPERCIVFANTKHRCEEIWGYLAADGHRVGLLTGDVAQKKRLSLLKQFTDGDLDILVATDVAARGLHISDVTHVFNYDLPDDREDYVHRIGRTGRAGESGVSISFACEEYAMNLPAIEEYIGHSIPVSQYETEALLELPKPYRLKRAVPPQGHTRHRSYHTK.

The Q motif signature appears at Gln9–Ala37. In terms of domain architecture, Helicase ATP-binding spans Leu40–Ile218. Ala53 to Thr60 provides a ligand contact to ATP. The DEAD box motif lies at Asp164 to Asp167. The region spanning Asp241 to Leu389 is the Helicase C-terminal domain.

Belongs to the DEAD box helicase family. RhlB subfamily. As to quaternary structure, component of the RNA degradosome, which is a multiprotein complex involved in RNA processing and mRNA degradation.

The protein localises to the cytoplasm. It catalyses the reaction ATP + H2O = ADP + phosphate + H(+). Functionally, DEAD-box RNA helicase involved in RNA degradation. Has RNA-dependent ATPase activity and unwinds double-stranded RNA. In Haemophilus influenzae (strain PittEE), this protein is ATP-dependent RNA helicase RhlB.